A 199-amino-acid polypeptide reads, in one-letter code: Holliday junction branch migration complex subunit RuvA (199 aa).

Positions 1–64 (MIALLTGKLA…EDAINLYGFR (64 aa)) are domain I. The interval 65–143 (TMEEKEMFQL…KLGHGPLQQD (79 aa)) is domain II. The flexible linker stretch occupies residues 144-148 (VAPAD). The domain III stretch occupies residues 149 to 199 (AHNDMRDDVVSALVNLGYKEAVVQKTVDEIGVAADATVESLLKQALKKLMK).

The protein belongs to the RuvA family. Homotetramer. Forms an RuvA(8)-RuvB(12)-Holliday junction (HJ) complex. HJ DNA is sandwiched between 2 RuvA tetramers; dsDNA enters through RuvA and exits via RuvB. An RuvB hexamer assembles on each DNA strand where it exits the tetramer. Each RuvB hexamer is contacted by two RuvA subunits (via domain III) on 2 adjacent RuvB subunits; this complex drives branch migration. In the full resolvosome a probable DNA-RuvA(4)-RuvB(12)-RuvC(2) complex forms which resolves the HJ.

It is found in the cytoplasm. In terms of biological role, the RuvA-RuvB-RuvC complex processes Holliday junction (HJ) DNA during genetic recombination and DNA repair, while the RuvA-RuvB complex plays an important role in the rescue of blocked DNA replication forks via replication fork reversal (RFR). RuvA specifically binds to HJ cruciform DNA, conferring on it an open structure. The RuvB hexamer acts as an ATP-dependent pump, pulling dsDNA into and through the RuvAB complex. HJ branch migration allows RuvC to scan DNA until it finds its consensus sequence, where it cleaves and resolves the cruciform DNA. This is Holliday junction branch migration complex subunit RuvA from Geotalea daltonii (strain DSM 22248 / JCM 15807 / FRC-32) (Geobacter daltonii).